We begin with the raw amino-acid sequence, 285 residues long: Pyrroline-5-carboxylate reductase (285 aa).

The protein belongs to the pyrroline-5-carboxylate reductase family. In terms of assembly, homotetramer.

It carries out the reaction L-proline + NADP(+) = (S)-1-pyrroline-5-carboxylate + NADPH + 2 H(+). It catalyses the reaction L-proline + NAD(+) = (S)-1-pyrroline-5-carboxylate + NADH + 2 H(+). Its pathway is amino-acid biosynthesis; L-proline biosynthesis; L-proline from L-glutamate 5-semialdehyde: step 1/1. This chain is Pyrroline-5-carboxylate reductase, found in Kluyveromyces lactis (strain ATCC 8585 / CBS 2359 / DSM 70799 / NBRC 1267 / NRRL Y-1140 / WM37) (Yeast).